Consider the following 320-residue polypeptide: Ferrochelatase (320 aa).

Fe cation is bound by residues histidine 194 and glutamate 275.

It belongs to the ferrochelatase family.

It localises to the cytoplasm. The enzyme catalyses heme b + 2 H(+) = protoporphyrin IX + Fe(2+). The protein operates within porphyrin-containing compound metabolism; protoheme biosynthesis; protoheme from protoporphyrin-IX: step 1/1. Catalyzes the ferrous insertion into protoporphyrin IX. This Yersinia pestis bv. Antiqua (strain Antiqua) protein is Ferrochelatase.